Here is a 189-residue protein sequence, read N- to C-terminus: Interleukin-23 subunit alpha (189 aa).

An N-terminal signal peptide occupies residues 1–19; sequence MLGSRAVMLLLLLPWTAQG. A disulfide bridge connects residues Cys-77 and Cys-89.

The protein belongs to the IL-6 superfamily. As to quaternary structure, heterodimer with IL12B; disulfide-linked. The heterodimer is known as interleukin IL-23. Interacts with IL23R; this interaction enables recruitment of IL12RB1. As to expression, secreted by activated dendritic and phagocytic cells and keratinocytes. Also expressed by dermal Langerhans cells (at protein level).

The protein resides in the secreted. Its function is as follows. Associates with IL12B to form the pro-inflammatory cytokine IL-23 that plays different roles in innate and adaptive immunity. Released by antigen-presenting cells such as dendritic cells or macrophages, binds to a heterodimeric receptor complex composed of IL12RB1 and IL23R to activate JAK2 and TYK2 which then phosphorylate the receptor to form a docking site leading to the phosphorylation of STAT3 and STAT4. This process leads to activation of several pathways including p38 MAPK or NF-kappa-B and promotes the production of pro-inflammatory cytokines such as interleukin-17A/IL17A. In turn, participates in the early and effective intracellular bacterial clearance. Promotes the expansion and survival of T-helper 17 cells, a CD4-positive helper T-cell subset that produces IL-17, as well as other IL-17-producing cells. The polypeptide is Interleukin-23 subunit alpha (IL23A) (Homo sapiens (Human)).